We begin with the raw amino-acid sequence, 729 residues long: Carbon monoxide dehydrogenase/acetyl-CoA synthase subunit alpha (729 aa).

[4Fe-4S] cluster-binding residues include cysteine 506, cysteine 509, cysteine 518, and cysteine 528. Cysteine 509 is a binding site for Ni(2+). Cysteine 595, glycine 596, and cysteine 597 together coordinate Ni(2+).

Tetramer of two alpha and two beta chains. Ni cation is required as a cofactor. It depends on [4Fe-4S] cluster as a cofactor.

It catalyses the reaction Co(I)-[corrinoid Fe-S protein] + acetyl-CoA + H(+) = methyl-Co(III)-[corrinoid Fe-S protein] + CO + CoA. In terms of biological role, the beta subunit generates CO from CO(2), while the alpha subunit (this protein) combines the CO with CoA and a methyl group to form acetyl-CoA. The methyl group, which is incorporated into acetyl-CoA, is transferred to the alpha subunit by a corrinoid iron-sulfur protein. This is Carbon monoxide dehydrogenase/acetyl-CoA synthase subunit alpha from Moorella thermoacetica (Clostridium thermoaceticum).